Reading from the N-terminus, the 131-residue chain is Small ribosomal subunit protein uS8 (131 aa).

The protein belongs to the universal ribosomal protein uS8 family. Part of the 30S ribosomal subunit. Contacts proteins S5 and S12.

In terms of biological role, one of the primary rRNA binding proteins, it binds directly to 16S rRNA central domain where it helps coordinate assembly of the platform of the 30S subunit. This Wolbachia sp. subsp. Brugia malayi (strain TRS) protein is Small ribosomal subunit protein uS8.